The chain runs to 455 residues: Argininosuccinate lyase (455 aa).

This sequence belongs to the lyase 1 family. Argininosuccinate lyase subfamily.

The protein resides in the cytoplasm. The enzyme catalyses 2-(N(omega)-L-arginino)succinate = fumarate + L-arginine. It participates in amino-acid biosynthesis; L-arginine biosynthesis; L-arginine from L-ornithine and carbamoyl phosphate: step 3/3. The chain is Argininosuccinate lyase from Caulobacter vibrioides (strain ATCC 19089 / CIP 103742 / CB 15) (Caulobacter crescentus).